The following is a 405-amino-acid chain: Diaminopimelate decarboxylase (405 aa).

Lys-46 carries the N6-(pyridoxal phosphate)lysine modification. Pyridoxal 5'-phosphate is bound by residues Gly-225 and 259-262 (EPGR). Substrate contacts are provided by Arg-262, Arg-298, and Tyr-302. Cys-329 serves as the catalytic Proton donor. Positions 330 and 358 each coordinate substrate. Tyr-358 contacts pyridoxal 5'-phosphate.

This sequence belongs to the Orn/Lys/Arg decarboxylase class-II family. LysA subfamily. In terms of assembly, homodimer. Requires pyridoxal 5'-phosphate as cofactor.

It carries out the reaction meso-2,6-diaminopimelate + H(+) = L-lysine + CO2. The protein operates within amino-acid biosynthesis; L-lysine biosynthesis via DAP pathway; L-lysine from DL-2,6-diaminopimelate: step 1/1. Its function is as follows. Specifically catalyzes the decarboxylation of meso-diaminopimelate (meso-DAP) to L-lysine. This Helicobacter pylori (strain ATCC 700392 / 26695) (Campylobacter pylori) protein is Diaminopimelate decarboxylase.